The primary structure comprises 271 residues: Keratin-associated protein 10-5 (271 aa).

Tandem repeats lie at residues 26-30 (CCEPP), 51-55 (CCQAA), 73-77 (CCQPA), 78-82 (CCASS), 88-92 (CCVPV), 93-97 (CCKPV), 98-102 (CCLPT), 110-114 (CCQQS), 120-124 (CCASS), 130-134 (CCVPV), 135-139 (CCKPV), 140-144 (CCVPT), 152-156 (CCQHS), 162-166 (CCTSS), 177-181 (CCKPV), 187-191 (CCVPV), 199-203 (CCQQS), 209-213 (CCTTS), 214-218 (CCRPS), 233-237 (CCLPI), 240-244 (CCAPA), and 251-255 (CCRPA). The 22 X 5 AA repeats of C-C-X(3) stretch occupies residues 26 to 255 (CCEPPCGTAP…SYQASCCRPA (230 aa)).

Belongs to the KRTAP type 10 family. In terms of assembly, interacts with hair keratins. Restricted to a narrow region of the hair fiber cuticle, lying approximately 20 cell layers above the apex of the dermal papilla of the hair root; not detected in any other tissues.

In the hair cortex, hair keratin intermediate filaments are embedded in an interfilamentous matrix, consisting of hair keratin-associated proteins (KRTAP), which are essential for the formation of a rigid and resistant hair shaft through their extensive disulfide bond cross-linking with abundant cysteine residues of hair keratins. The matrix proteins include the high-sulfur and high-glycine-tyrosine keratins. In Homo sapiens (Human), this protein is Keratin-associated protein 10-5 (KRTAP10-5).